The following is a 170-amino-acid chain: Peptide deformylase (170 aa).

The Fe cation site is built by cysteine 91 and histidine 133. Glutamate 134 is a catalytic residue. Histidine 137 contributes to the Fe cation binding site.

This sequence belongs to the polypeptide deformylase family. The cofactor is Fe(2+).

It carries out the reaction N-terminal N-formyl-L-methionyl-[peptide] + H2O = N-terminal L-methionyl-[peptide] + formate. In terms of biological role, removes the formyl group from the N-terminal Met of newly synthesized proteins. Requires at least a dipeptide for an efficient rate of reaction. N-terminal L-methionine is a prerequisite for activity but the enzyme has broad specificity at other positions. The protein is Peptide deformylase of Actinobacillus pleuropneumoniae serotype 7 (strain AP76).